Reading from the N-terminus, the 520-residue chain is Tetratricopeptide repeat protein 6 (520 aa).

TPR repeat units lie at residues 57 to 90 (MTMC…ISHS), 101 to 138 (ADCL…DKNS), 139 to 172 (YTAF…DATE), 176 to 209 (LNTF…SRTN), 210 to 243 (GSLC…NPCF), 245 to 280 (DAYV…NPAY), 281 to 314 (IKAR…DPKN), 320 to 347 (GRAV…ISTT), 348 to 381 (AEFL…NPKY), 382 to 415 (SLAY…DPEN), 416 to 449 (EYVL…CPFW), 450 to 483 (AAVY…KPND), and 484 to 517 (ALVY…EDYA).

This Homo sapiens (Human) protein is Tetratricopeptide repeat protein 6.